We begin with the raw amino-acid sequence, 212 residues long: Putative tyrosine-protein phosphatase OCA1 (212 aa).

The interval 1 to 27 is disordered; the sequence is MSNKDTSILKGNVDHEEADSNPKLRKI. The segment covering 12–22 has biased composition (basic and acidic residues); it reads NVDHEEADSNP. Positions 40 to 208 constitute a Tyrosine-protein phosphatase domain; sequence NFCPVERQLY…SVEIDPSKVP (169 aa). Cys146 functions as the Phosphocysteine intermediate in the catalytic mechanism.

It belongs to the protein-tyrosine phosphatase family.

The protein resides in the cytoplasm. The enzyme catalyses O-phospho-L-tyrosyl-[protein] + H2O = L-tyrosyl-[protein] + phosphate. Putative tyrosine-protein phosphatase required for protection against superoxide stress. This is Putative tyrosine-protein phosphatase OCA1 (OCA1) from Scheffersomyces stipitis (strain ATCC 58785 / CBS 6054 / NBRC 10063 / NRRL Y-11545) (Yeast).